The following is a 487-amino-acid chain: Probable glycine dehydrogenase (decarboxylating) subunit 2 (487 aa).

Lys-273 carries the post-translational modification N6-(pyridoxal phosphate)lysine.

Belongs to the GcvP family. C-terminal subunit subfamily. As to quaternary structure, the glycine cleavage system is composed of four proteins: P, T, L and H. In this organism, the P 'protein' is a heterodimer of two subunits. Requires pyridoxal 5'-phosphate as cofactor.

The catalysed reaction is N(6)-[(R)-lipoyl]-L-lysyl-[glycine-cleavage complex H protein] + glycine + H(+) = N(6)-[(R)-S(8)-aminomethyldihydrolipoyl]-L-lysyl-[glycine-cleavage complex H protein] + CO2. Its function is as follows. The glycine cleavage system catalyzes the degradation of glycine. The P protein binds the alpha-amino group of glycine through its pyridoxal phosphate cofactor; CO(2) is released and the remaining methylamine moiety is then transferred to the lipoamide cofactor of the H protein. The chain is Probable glycine dehydrogenase (decarboxylating) subunit 2 from Lysinibacillus sphaericus (strain C3-41).